Consider the following 137-residue polypeptide: Diacylglycerol kinase (137 aa).

Residue E42 participates in a divalent metal cation binding. 2 helical membrane-spanning segments follow: residues 49–67 (LIAF…ATFF) and 73–89 (AILF…NTAI). E83 acts as the Proton acceptor in catalysis. Residue E90 coordinates a divalent metal cation. A helical transmembrane segment spans residues 112–132 (SFACLCLIVANGVYAAYVVIF).

Belongs to the bacterial diacylglycerol kinase family. Mg(2+) is required as a cofactor.

It localises to the cell inner membrane. The enzyme catalyses a 1,2-diacyl-sn-glycerol + ATP = a 1,2-diacyl-sn-glycero-3-phosphate + ADP + H(+). In terms of biological role, catalyzes the ATP-dependent phosphorylation of sn-l,2-diacylglycerol (DAG) to phosphatidic acid. Involved in the recycling of diacylglycerol produced as a by-product during membrane-derived oligosaccharide (MDO) biosynthesis. The chain is Diacylglycerol kinase (dgkA) from Sinorhizobium sp.